The following is a 940-amino-acid chain: Phosphoenolpyruvate carboxylase (940 aa).

Catalysis depends on residues His-138 and Lys-603.

This sequence belongs to the PEPCase type 1 family. The cofactor is Mg(2+).

It carries out the reaction oxaloacetate + phosphate = phosphoenolpyruvate + hydrogencarbonate. Forms oxaloacetate, a four-carbon dicarboxylic acid source for the tricarboxylic acid cycle. This is Phosphoenolpyruvate carboxylase from Streptococcus thermophilus (strain CNRZ 1066).